Reading from the N-terminus, the 306-residue chain is Flavin adenine dinucleotide synthase (306 aa).

FAD is bound by residues S59, I107, G164, 182–185, R190, and R300; that span reads DSNW.

This sequence belongs to the PAPS reductase family. FAD1 subfamily.

The protein resides in the cytoplasm. The catalysed reaction is FMN + ATP + H(+) = FAD + diphosphate. It functions in the pathway cofactor biosynthesis; FAD biosynthesis; FAD from FMN: step 1/1. Functionally, catalyzes the adenylation of flavin mononucleotide (FMN) to form flavin adenine dinucleotide (FAD) coenzyme. The chain is Flavin adenine dinucleotide synthase from Saccharomyces cerevisiae (strain ATCC 204508 / S288c) (Baker's yeast).